Consider the following 447-residue polypeptide: MAKRKISKAVLAYSGGLDTSIILKWLQDEYECEVVTFTADLGQGEEVEPARQKALDMGIKPENIFILDLREEFVRDFVFPMFRANAIYEGEYLLGTSIARPLISKKQIEIAHQTGADAVSHGATGKGNDQVRFELGYLALDPDIAVIAPWREWDLNSRTKLLAYAQEHGINIDNKGKPKPYSMDANLLHISYEGEHLENPYAEPEEDMWLWSVSPENAPDEPEYITISYKNGDPIAINREEMSPATILETLNTYGKKHGIGRIDIVENRMVGMKARGCYETPGGTIMLKAHRAIESITLDREEAHMKDELMPKYAKLIYNGMWWSPERKMLQAAIDATQENVEGTVKLKLYKGNVIVVGRKSEVSLYSEEHSTFEADDVYNQKDAEGFIRLNALRFIIEGKKQPERIKSLIGDYEETEVCRIETGSITICERIKRFFGFGKKTDKNA.

ATP is bound by residues 12 to 20 and alanine 39; that span reads AYSGGLDTS. 2 residues coordinate L-citrulline: tyrosine 92 and serine 97. ATP is bound at residue glycine 122. Positions 124, 128, and 129 each coordinate L-aspartate. Asparagine 128 contacts L-citrulline. The L-citrulline site is built by arginine 132, serine 182, serine 191, glutamate 267, and tyrosine 279.

Belongs to the argininosuccinate synthase family. Type 1 subfamily. In terms of assembly, homotetramer.

It localises to the cytoplasm. The enzyme catalyses L-citrulline + L-aspartate + ATP = 2-(N(omega)-L-arginino)succinate + AMP + diphosphate + H(+). It participates in amino-acid biosynthesis; L-arginine biosynthesis; L-arginine from L-ornithine and carbamoyl phosphate: step 2/3. In Sulfurovum sp. (strain NBC37-1), this protein is Argininosuccinate synthase.